The sequence spans 604 residues: Structure-specific endonuclease subunit MUS81 (604 aa).

Disordered stretches follow at residues 93–138, 227–248, and 253–272; these read AAVH…REYV, KLDS…GQNV, and LEEE…RPAV. 2 stretches are compositionally biased toward basic and acidic residues: residues 116–128 and 227–240; these read EHTK…VRKE and KLDS…HEDV. The segment at 138–254 is winged helix domain (WHD); critical for endonuclease activity; the sequence is VPQKRSGGYA…GQNVVDLTLE (117 aa). Residues 253-262 are compositionally biased toward acidic residues; sequence LEEEDEDEEK. Positions 314–423 constitute an ERCC4 domain; the sequence is VLCVDLCETT…KPIYLVEECG (110 aa). Active-site residues include Asp318, Glu321, and Asp353. The Mg(2+) site is built by Asp318, Glu321, Asp353, Glu384, and Arg385. The tract at residues 524–598 is helix-hairpin-helix (2HhH); involved in DNA recognition and bending; that stretch reads VREVFARQLM…LSRTIYQLYC (75 aa).

Belongs to the XPF family. As to quaternary structure, part of the heterodimeric DNA structure-specific endonuclease complex MUS81-EME1. Part of the heterodimeric DNA structure-specific endonuclease complex MUS81-EME2. Mg(2+) is required as a cofactor.

Its subcellular location is the nucleus. The protein localises to the nucleolus. Catalytic subunit of two functionally distinct, structure-specific, heterodimeric DNA endonucleases MUS81-EME1 and MUS81-EME2 that are involved in the maintenance of genome stability. Both endonucleases have essentially the same substrate specificity though MUS81-EME2 is more active than its MUS81-EME1 counterpart. Both cleave 3'-flaps and nicked Holliday junctions, and exhibit limited endonuclease activity with 5' flaps and nicked double-stranded DNAs. MUS81-EME2 which is active during the replication of DNA is more specifically involved in replication fork processing. Replication forks frequently encounter obstacles to their passage, including DNA base lesions, DNA interstrand cross-links, difficult-to-replicate sequences, transcription bubbles, or tightly bound proteins. One mechanism for the restart of a stalled replication fork involves nucleolytic cleavage mediated by the MUS81-EME2 endonuclease. By acting upon the stalled fork, MUS81-EME2 generates a DNA double-strand break (DSB) that can be repaired by homologous recombination, leading to the restoration of an active fork. MUS81-EME2 could also function in telomere maintenance. MUS81-EME1, on the other hand, is active later in the cell cycle and functions in the resolution of mitotic recombination intermediates including the Holliday junctions, the four-way DNA intermediates that form during homologous recombination. This Danio rerio (Zebrafish) protein is Structure-specific endonuclease subunit MUS81 (mus81).